A 156-amino-acid chain; its full sequence is Large ribosomal subunit protein uL15 (156 aa).

Positions 1–44 are disordered; the sequence is MKLNELRDNPGASPKRTRVGRGPGSGKGKMGGRGIKGQKSRSGV. The segment covering 21 to 35 has biased composition (gly residues); the sequence is RGPGSGKGKMGGRGI.

The protein belongs to the universal ribosomal protein uL15 family. Part of the 50S ribosomal subunit.

In terms of biological role, binds to the 23S rRNA. The polypeptide is Large ribosomal subunit protein uL15 (Ruegeria sp. (strain TM1040) (Silicibacter sp.)).